We begin with the raw amino-acid sequence, 140 residues long: 3-hydroxyacyl-[acyl-carrier-protein] dehydratase FabZ (140 aa).

H47 is an active-site residue.

This sequence belongs to the thioester dehydratase family. FabZ subfamily.

The protein localises to the cytoplasm. It carries out the reaction a (3R)-hydroxyacyl-[ACP] = a (2E)-enoyl-[ACP] + H2O. Functionally, involved in unsaturated fatty acids biosynthesis. Catalyzes the dehydration of short chain beta-hydroxyacyl-ACPs and long chain saturated and unsaturated beta-hydroxyacyl-ACPs. The polypeptide is 3-hydroxyacyl-[acyl-carrier-protein] dehydratase FabZ (Streptococcus suis (strain 98HAH33)).